The primary structure comprises 333 residues: Tryptophan--tRNA ligase (333 aa).

Residues 11-13 and 19-20 contribute to the ATP site; these read QPS and GN. A 'HIGH' region motif is present at residues 12–20; the sequence is PSGELTIGN. Aspartate 135 is an L-tryptophan binding site. ATP is bound by residues 147–149, valine 186, and 195–199; these read GED and KMSKS. The 'KMSKS' region motif lies at 195–199; the sequence is KMSKS.

Belongs to the class-I aminoacyl-tRNA synthetase family. As to quaternary structure, homodimer.

Its subcellular location is the cytoplasm. The catalysed reaction is tRNA(Trp) + L-tryptophan + ATP = L-tryptophyl-tRNA(Trp) + AMP + diphosphate + H(+). Catalyzes the attachment of tryptophan to tRNA(Trp). This chain is Tryptophan--tRNA ligase, found in Pasteurella multocida (strain Pm70).